The sequence spans 435 residues: Gamma-glutamyl phosphate reductase (435 aa).

It belongs to the gamma-glutamyl phosphate reductase family.

The protein resides in the cytoplasm. The enzyme catalyses L-glutamate 5-semialdehyde + phosphate + NADP(+) = L-glutamyl 5-phosphate + NADPH + H(+). Its pathway is amino-acid biosynthesis; L-proline biosynthesis; L-glutamate 5-semialdehyde from L-glutamate: step 2/2. Its function is as follows. Catalyzes the NADPH-dependent reduction of L-glutamate 5-phosphate into L-glutamate 5-semialdehyde and phosphate. The product spontaneously undergoes cyclization to form 1-pyrroline-5-carboxylate. This chain is Gamma-glutamyl phosphate reductase, found in Synechococcus sp. (strain WH7803).